A 153-amino-acid chain; its full sequence is UPF0260 protein YcgN (153 aa).

This sequence belongs to the UPF0260 family.

This chain is UPF0260 protein YcgN, found in Salmonella agona (strain SL483).